We begin with the raw amino-acid sequence, 106 residues long: Flagellar transcriptional regulator FlhD (106 aa).

It belongs to the FlhD family. Homodimer; disulfide-linked. Forms a heterohexamer composed of two FlhC and four FlhD subunits. Each FlhC binds a FlhD dimer, forming a heterotrimer, and a hexamer assembles by dimerization of two heterotrimers.

It localises to the cytoplasm. In terms of biological role, functions in complex with FlhC as a master transcriptional regulator that regulates transcription of several flagellar and non-flagellar operons by binding to their promoter region. Activates expression of class 2 flagellar genes, including fliA, which is a flagellum-specific sigma factor that turns on the class 3 genes. Also regulates genes whose products function in a variety of physiological pathways. This chain is Flagellar transcriptional regulator FlhD, found in Burkholderia pseudomallei (strain 1710b).